A 132-amino-acid polypeptide reads, in one-letter code: Putative RNase AF_0947 (132 aa).

Residues R91 and H96 contribute to the active site. Residues 91 to 98 (RNAIAHHY) carry the RX(4)HXY motif motif. Y98 carries the O-di-AMP-tyrosine modification.

The protein belongs to the HepT RNase toxin family. As to quaternary structure, homodimer, probably forms a complex with cognate antitoxin AF_0948. Post-translationally, modified by cognate antitoxin AF_0948; probably at least 2 successive AMPylation events occur on Tyr-98.

Functionally, probable toxic component of a putative type VII toxin-antitoxin (TA) system, probably an RNase. Probably neutralized by cognate antitoxin AF_0948. Neutralization may be due to AMPylation by AF_0948. This chain is Putative RNase AF_0947, found in Archaeoglobus fulgidus (strain ATCC 49558 / DSM 4304 / JCM 9628 / NBRC 100126 / VC-16).